The primary structure comprises 288 residues: Proteasome assembly chaperone 1 (288 aa).

Ala2 carries the N-acetylalanine modification. The tract at residues Thr12 to Arg38 is disordered. Thr18 carries the phosphothreonine modification. Basic and acidic residues predominate over residues Asn28–Arg38. Residue Thr54 is modified to Phosphothreonine. Residue Ser180 is modified to Phosphoserine. N6-acetyllysine is present on Lys264.

Belongs to the PSMG1 family. Forms a heterodimer with PSMG2. The PSMG1-PSMG2 heterodimer interacts directly with the PSMA5 and PSMA7 proteasome alpha subunits. In terms of processing, degraded by the proteasome upon completion of 20S proteasome maturation.

It localises to the cytoplasm. The protein resides in the endoplasmic reticulum. Functionally, chaperone protein which promotes assembly of the 20S proteasome as part of a heterodimer with PSMG2. The PSMG1-PSMG2 heterodimer binds to the PSMA5 and PSMA7 proteasome subunits, promotes assembly of the proteasome alpha subunits into the heteroheptameric alpha ring and prevents alpha ring dimerization. The polypeptide is Proteasome assembly chaperone 1 (Bos taurus (Bovine)).